Consider the following 728-residue polypeptide: Glycine--tRNA ligase (728 aa).

A mitochondrion-targeting transit peptide spans 1-32 (MPCLLPTLLRATRAALLLQSPRVVAAPASQRL). Positions 52 to 108 (LLAPLRLAVRQQGDFVRKLKEDKAPQVDVDRAVAELKARKRVLEAKELALQPKDDIV) constitute a WHEP-TRS domain. An N6-acetyllysine modification is found at Lys-193. Glu-288 contacts glycine. Residues 320-322 (RNE) and 331-332 (RV) each bind ATP. Glu-339 is a binding site for glycine. Position 442 is a phosphotyrosine (Tyr-442). Residue 446 to 447 (EI) participates in ATP binding. At Lys-490 the chain carries N6-acetyllysine. 565–567 (EPS) provides a ligand contact to glycine. Arg-572 lines the ATP pocket. Ser-689 is subject to Phosphoserine. Thr-725 carries the post-translational modification Phosphothreonine.

The protein belongs to the class-II aminoacyl-tRNA synthetase family. Homodimer.

It is found in the cytoplasm. The protein localises to the mitochondrion. It localises to the cell projection. The protein resides in the axon. Its subcellular location is the secreted. It is found in the extracellular exosome. It carries out the reaction tRNA(Gly) + glycine + ATP = glycyl-tRNA(Gly) + AMP + diphosphate. The catalysed reaction is 2 ATP + H(+) = P(1),P(4)-bis(5'-adenosyl) tetraphosphate + diphosphate. Functionally, catalyzes the ATP-dependent ligation of glycine to the 3'-end of its cognate tRNA, via the formation of an aminoacyl-adenylate intermediate (Gly-AMP). Also produces diadenosine tetraphosphate (Ap4A), a universal pleiotropic signaling molecule needed for cell regulation pathways, by direct condensation of 2 ATPs. Thereby, may play a special role in Ap4A homeostasis. The sequence is that of Glycine--tRNA ligase (Gars1) from Rattus norvegicus (Rat).